The chain runs to 136 residues: MLQPKRMKFRKMFKGRNRGLANGTEVSFGEFGLKAVGRGRLTARQIESARRAMTRHIKRQGQIWIRVFPDKPITSKPLEVRMGKGKGNVEYWVCQIQPGKVLYEMNGVSEELAREAFALAAAKLPLKTTFVTKTVM.

This sequence belongs to the universal ribosomal protein uL16 family. As to quaternary structure, part of the 50S ribosomal subunit.

In terms of biological role, binds 23S rRNA and is also seen to make contacts with the A and possibly P site tRNAs. This chain is Large ribosomal subunit protein uL16, found in Shewanella piezotolerans (strain WP3 / JCM 13877).